The chain runs to 288 residues: Lysosomal thioesterase PPT2-B (288 aa).

A signal peptide spans 1-20; that stretch reads MRGYLLLLPLLLCLVDNSVS. Cysteines 95 and 103 form a disulfide. Residue serine 97 is the Nucleophile of the active site. Residue asparagine 143 is glycosylated (N-linked (GlcNAc...) asparagine). A disulfide bond links cysteine 151 and cysteine 162. The N-linked (GlcNAc...) asparagine glycan is linked to asparagine 192. Catalysis depends on residues aspartate 214 and histidine 269. A glycan (N-linked (GlcNAc...) asparagine) is linked at asparagine 275.

It belongs to the palmitoyl-protein thioesterase family.

Its subcellular location is the lysosome. The enzyme catalyses hexadecanoyl-CoA + H2O = hexadecanoate + CoA + H(+). The catalysed reaction is S-hexadecanoyl-N-acetylcysteamine + H2O = N-acetylcysteamine + hexadecanoate + H(+). Its function is as follows. Catalyzes the cleavage of thioester bonds from S-palmitoyl-CoA or S-palmitoyl-N-acetylcysteamine (unbranched structures) but does not have activity against palmitoylcysteine or palmitoylated proteins, branched structures or bulky head groups. Conversely, hydrolyzes both long and short chain fatty acyl-CoA substrate. This is Lysosomal thioesterase PPT2-B (ppt2-b) from Xenopus laevis (African clawed frog).